Consider the following 252-residue polypeptide: Ferritin-2, chloroplastic (252 aa).

Residues 1–43 (MMLRVSSSPAAAVANHLSGGAAATTAPARVTAQRSGVSLSAAA) constitute a chloroplast transit peptide. Residues 44–80 (AAGKGKEVLSGVVFQPFEEIKGELALVPQSPDRSLAR) form an extension peptide (EP) region. In terms of domain architecture, Ferritin-like diiron spans 81-234 (HKFVDDCEAA…KYVAQLRRVG (154 aa)). Fe cation-binding residues include E98, E133, H136, E182, and Q216.

The protein belongs to the ferritin family. As to quaternary structure, oligomer of 24 subunits. There are two types of subunits: L (light) chain and H (heavy) chain. The major chain can be light or heavy, depending on the species and tissue type. The functional molecule forms a roughly spherical shell with a diameter of 12 nm and contains a central cavity into which the insoluble mineral iron core is deposited. In terms of tissue distribution, ferritins accumulate in seed during maturation. Then, they are degraded during the first days of germination. Present in roots and leaves after iron treatment.

It localises to the plastid. The protein resides in the chloroplast. It catalyses the reaction 4 Fe(2+) + O2 + 4 H(+) = 4 Fe(3+) + 2 H2O. Its function is as follows. Stores iron in a soluble, non-toxic, readily available form. Important for iron homeostasis. Has ferroxidase activity. Iron is taken up in the ferrous form and deposited as ferric hydroxides after oxidation. This Zea mays (Maize) protein is Ferritin-2, chloroplastic (FER2).